A 434-amino-acid chain; its full sequence is ATP-dependent RNA helicase sub2 (434 aa).

The Q motif motif lies at 59–87 (TGFRDFLLKGELLRAITDCGFEHPSEVQQ). A Helicase ATP-binding domain is found at 90-265 (IPTAILNVDV…KKFMRNPLEV (176 aa)). 103-110 (AKSGLGKT) contacts ATP. A DECD box motif is present at residues 212–215 (DECD). Positions 293–430 (KLNELLDSLE…EYPEEGVDSS (138 aa)) constitute a Helicase C-terminal domain.

Belongs to the DEAD box helicase family. DECD subfamily.

It localises to the nucleus. It catalyses the reaction ATP + H2O = ADP + phosphate + H(+). Its function is as follows. ATP-binding RNA helicase involved in transcription elongation and required for the export of mRNA out of the nucleus. SUB2 also plays a role in pre-mRNA splicing and spliceosome assembly. May be involved in rDNA and telomeric silencing, and maintenance of genome integrity. In Emericella nidulans (strain FGSC A4 / ATCC 38163 / CBS 112.46 / NRRL 194 / M139) (Aspergillus nidulans), this protein is ATP-dependent RNA helicase sub2 (sub2).